The primary structure comprises 163 residues: Protein-export protein SecB (163 aa).

Belongs to the SecB family. Homotetramer, a dimer of dimers. One homotetramer interacts with 1 SecA dimer.

The protein resides in the cytoplasm. In terms of biological role, one of the proteins required for the normal export of preproteins out of the cell cytoplasm. It is a molecular chaperone that binds to a subset of precursor proteins, maintaining them in a translocation-competent state. It also specifically binds to its receptor SecA. This chain is Protein-export protein SecB, found in Burkholderia ambifaria (strain MC40-6).